The chain runs to 554 residues: 3-(3-hydroxy-phenyl)propionate/3-hydroxycinnamic acid hydroxylase (554 aa).

FAD-binding positions include 17–46 and 285–295; these read QVAI…LVEK and FRIDRVLLAGD.

This sequence belongs to the PheA/TfdB FAD monooxygenase family. FAD is required as a cofactor.

The enzyme catalyses 3-(3-hydroxyphenyl)propanoate + NADH + O2 + H(+) = 3-(2,3-dihydroxyphenyl)propanoate + NAD(+) + H2O. The catalysed reaction is (2E)-3-(3-hydroxyphenyl)prop-2-enoate + NADH + O2 + H(+) = (2E)-3-(2,3-dihydroxyphenyl)prop-2-enoate + NAD(+) + H2O. It participates in aromatic compound metabolism; 3-phenylpropanoate degradation. Catalyzes the insertion of one atom of molecular oxygen into position 2 of the phenyl ring of 3-(3-hydroxyphenyl)propionate (3-HPP) and hydroxycinnamic acid (3HCI). The chain is 3-(3-hydroxy-phenyl)propionate/3-hydroxycinnamic acid hydroxylase from Klebsiella pneumoniae (strain 342).